The following is a 181-amino-acid chain: Adenine phosphoribosyltransferase (181 aa).

This sequence belongs to the purine/pyrimidine phosphoribosyltransferase family. In terms of assembly, homodimer.

The protein localises to the cytoplasm. The enzyme catalyses AMP + diphosphate = 5-phospho-alpha-D-ribose 1-diphosphate + adenine. It functions in the pathway purine metabolism; AMP biosynthesis via salvage pathway; AMP from adenine: step 1/1. Catalyzes a salvage reaction resulting in the formation of AMP, that is energically less costly than de novo synthesis. The sequence is that of Adenine phosphoribosyltransferase from Shewanella woodyi (strain ATCC 51908 / MS32).